We begin with the raw amino-acid sequence, 482 residues long: Anaerobic nitric oxide reductase flavorubredoxin (482 aa).

Residues 30 to 210 (LRGSSYNSYL…PFSRLVTPKI (181 aa)) form a zinc metallo-hydrolase region. His-79, Glu-81, Asp-83, His-147, Asp-166, and His-227 together coordinate Fe cation. Residues 254 to 393 (ITIFYDTMSN…LCRQHGRDIA (140 aa)) form the Flavodoxin-like domain. FMN-binding positions include 260-264 (TMSNN) and 342-369 (AFGSHGWSGGAVDRLSTRLQDAGFEMSL). The Rubredoxin-like domain occupies 426–477 (GPMMQCSVCQWVYDPAKGEPNQDVQPGTPWSEVPDNFLCPECSLGKDVFDVL). Positions 431, 434, 464, and 467 each coordinate Fe cation.

It in the N-terminal section; belongs to the zinc metallo-hydrolase group 3 family. Homotetramer. Fe cation serves as cofactor. Requires FMN as cofactor.

It localises to the cytoplasm. The protein operates within nitrogen metabolism; nitric oxide reduction. Anaerobic nitric oxide reductase; uses NADH to detoxify nitric oxide (NO), protecting several 4Fe-4S NO-sensitive enzymes. Has at least 2 reductase partners, only one of which (NorW, flavorubredoxin reductase) has been identified. NO probably binds to the di-iron center; electrons enter from the NorW at rubredoxin and are transferred sequentially to the FMN center and the di-iron center. Also able to function as an aerobic oxygen reductase. The polypeptide is Anaerobic nitric oxide reductase flavorubredoxin (Klebsiella pneumoniae subsp. pneumoniae (strain ATCC 700721 / MGH 78578)).